A 186-amino-acid chain; its full sequence is MEQEKQAQIEQAVTTILEAVGEDTQRAGLIDTPKRVAKMYAEVFSGLTEPEFDDYKLFDSLNEGEMVLVKDIAFYSMCEHHLLPFYGKVHVAYLPEGGKVLGLSKLPRLVEHCAKRPTVQEDLTVTIARKLQENIPVKGIAVAIEAEHMCMTMRGVKTPQSSTKTFQFTGLFKEQEWKNQFLMEIR.

Cys-78, His-81, and Cys-150 together coordinate Zn(2+).

Belongs to the GTP cyclohydrolase I family. Toroid-shaped homodecamer, composed of two pentamers of five dimers.

It carries out the reaction GTP + H2O = 7,8-dihydroneopterin 3'-triphosphate + formate + H(+). Its pathway is cofactor biosynthesis; 7,8-dihydroneopterin triphosphate biosynthesis; 7,8-dihydroneopterin triphosphate from GTP: step 1/1. The chain is GTP cyclohydrolase 1 from Enterococcus faecalis (strain ATCC 700802 / V583).